The chain runs to 156 residues: Small ribosomal subunit protein uS7 (156 aa).

This sequence belongs to the universal ribosomal protein uS7 family. As to quaternary structure, part of the 30S ribosomal subunit. Contacts proteins S9 and S11.

One of the primary rRNA binding proteins, it binds directly to 16S rRNA where it nucleates assembly of the head domain of the 30S subunit. Is located at the subunit interface close to the decoding center, probably blocks exit of the E-site tRNA. This Prochlorococcus marinus (strain MIT 9303) protein is Small ribosomal subunit protein uS7.